The sequence spans 1239 residues: DNA-directed RNA polymerase subunit beta (1239 aa).

Residues 1182 to 1239 (IEGAENQLEDKEEKEEEKEENYKEDSDEYDDLREEDVEPDLEELSLDDLDLDDFGDEH) are disordered. Acidic residues-rich tracts occupy residues 1191–1200 (DKEEKEEEKE) and 1206–1239 (DSDEYDDLREEDVEPDLEELSLDDLDLDDFGDEH).

This sequence belongs to the RNA polymerase beta chain family. The RNAP catalytic core consists of 2 alpha, 1 beta, 1 beta' and 1 omega subunit. When a sigma factor is associated with the core the holoenzyme is formed, which can initiate transcription.

The catalysed reaction is RNA(n) + a ribonucleoside 5'-triphosphate = RNA(n+1) + diphosphate. Its function is as follows. DNA-dependent RNA polymerase catalyzes the transcription of DNA into RNA using the four ribonucleoside triphosphates as substrates. The sequence is that of DNA-directed RNA polymerase subunit beta from Clostridium botulinum (strain Loch Maree / Type A3).